The primary structure comprises 87 residues: Glutaredoxin (87 aa).

Positions 1–87 (MFVVIFGRPG…YAKENLGLFD (87 aa)) constitute a Glutaredoxin domain. Cys11 and Cys14 are oxidised to a cystine.

The protein belongs to the glutaredoxin family. Monomer.

It localises to the cytoplasm. Functionally, has a glutathione-disulfide oxidoreductase activity in the presence of NADPH and glutathione reductase. Reduces low molecular weight disulfides and proteins. The protein is Glutaredoxin (grx) of Vibrio cholerae serotype O1 (strain ATCC 39315 / El Tor Inaba N16961).